We begin with the raw amino-acid sequence, 306 residues long: Dihydroorotate dehydrogenase B (NAD(+)), catalytic subunit (306 aa).

FMN is bound by residues S24 and K48 to A49. Substrate contacts are provided by residues K48 and N72–L76. N102 and N130 together coordinate FMN. N130 contacts substrate. C133 functions as the Nucleophile in the catalytic mechanism. K168 and I194 together coordinate FMN. N195–T196 lines the substrate pocket. Residues G220, G246–G247, and G268–T269 each bind FMN.

Belongs to the dihydroorotate dehydrogenase family. Type 1 subfamily. In terms of assembly, heterotetramer of 2 PyrK and 2 PyrD type B subunits. FMN serves as cofactor.

Its subcellular location is the cytoplasm. It carries out the reaction (S)-dihydroorotate + NAD(+) = orotate + NADH + H(+). Its pathway is pyrimidine metabolism; UMP biosynthesis via de novo pathway; orotate from (S)-dihydroorotate (NAD(+) route): step 1/1. In terms of biological role, catalyzes the conversion of dihydroorotate to orotate with NAD(+) as electron acceptor. The chain is Dihydroorotate dehydrogenase B (NAD(+)), catalytic subunit (pyrD) from Malacoplasma penetrans (strain HF-2) (Mycoplasma penetrans).